The sequence spans 367 residues: 4-hydroxy-3-methylbut-2-en-1-yl diphosphate synthase (flavodoxin) (367 aa).

Residues cysteine 268, cysteine 271, cysteine 303, and glutamate 310 each coordinate [4Fe-4S] cluster.

This sequence belongs to the IspG family. [4Fe-4S] cluster is required as a cofactor.

The enzyme catalyses (2E)-4-hydroxy-3-methylbut-2-enyl diphosphate + oxidized [flavodoxin] + H2O + 2 H(+) = 2-C-methyl-D-erythritol 2,4-cyclic diphosphate + reduced [flavodoxin]. It functions in the pathway isoprenoid biosynthesis; isopentenyl diphosphate biosynthesis via DXP pathway; isopentenyl diphosphate from 1-deoxy-D-xylulose 5-phosphate: step 5/6. Functionally, converts 2C-methyl-D-erythritol 2,4-cyclodiphosphate (ME-2,4cPP) into 1-hydroxy-2-methyl-2-(E)-butenyl 4-diphosphate. This is 4-hydroxy-3-methylbut-2-en-1-yl diphosphate synthase (flavodoxin) from Halalkalibacterium halodurans (strain ATCC BAA-125 / DSM 18197 / FERM 7344 / JCM 9153 / C-125) (Bacillus halodurans).